Consider the following 425-residue polypeptide: GTPase Obg (425 aa).

The region spanning 1–158 (MFIDKARIFV…RWITLELKMI (158 aa)) is the Obg domain. Residues 159–330 (ADVGLLGFPN…VIAYVSKMLK (172 aa)) enclose the OBG-type G domain. Residues 165-172 (GFPNVGKS), 190-194 (FTTLT), 212-215 (DIPG), 282-285 (NKFD), and 311-313 (SAA) contribute to the GTP site. Ser-172 and Thr-192 together coordinate Mg(2+). The region spanning 344-425 (YRPELDIGTE…IYELEFEFYN (82 aa)) is the OCT domain.

Belongs to the TRAFAC class OBG-HflX-like GTPase superfamily. OBG GTPase family. In terms of assembly, monomer. It depends on Mg(2+) as a cofactor.

It localises to the cytoplasm. Its function is as follows. An essential GTPase which binds GTP, GDP and possibly (p)ppGpp with moderate affinity, with high nucleotide exchange rates and a fairly low GTP hydrolysis rate. Plays a role in control of the cell cycle, stress response, ribosome biogenesis and in those bacteria that undergo differentiation, in morphogenesis control. This is GTPase Obg from Clostridioides difficile (strain 630) (Peptoclostridium difficile).